A 321-amino-acid polypeptide reads, in one-letter code: Ornithine carbamoyltransferase (321 aa).

Carbamoyl phosphate contacts are provided by residues serine 53–threonine 56, glutamine 80, arginine 104, and histidine 131–glutamine 134. Residues asparagine 166, aspartate 230, and serine 234–methionine 235 contribute to the L-ornithine site. Residues cysteine 270 to leucine 271 and arginine 298 contribute to the carbamoyl phosphate site.

The protein belongs to the aspartate/ornithine carbamoyltransferase superfamily. OTCase family.

The protein localises to the cytoplasm. It catalyses the reaction carbamoyl phosphate + L-ornithine = L-citrulline + phosphate + H(+). It participates in amino-acid biosynthesis; L-arginine biosynthesis; L-arginine from L-ornithine and carbamoyl phosphate: step 1/3. In terms of biological role, reversibly catalyzes the transfer of the carbamoyl group from carbamoyl phosphate (CP) to the N(epsilon) atom of ornithine (ORN) to produce L-citrulline. The polypeptide is Ornithine carbamoyltransferase (Bifidobacterium longum (strain NCC 2705)).